We begin with the raw amino-acid sequence, 775 residues long: Putative late blight resistance protein homolog R1A-3 (775 aa).

Residues 16-39 adopt a coiled-coil conformation; it reads PRMNEEIVGFEDVIENLRKKLLSE. The NB-ARC domain maps to 17–237; the sequence is RMNEEIVGFE…LSEMEKEVEC (221 aa). 50–57 contacts ATP; that stretch reads GMPGLGKT. An HMA domain is found at 711-775; sequence IKKMILQFDI…VGKLIDSGML (65 aa).

This sequence belongs to the disease resistance NB-LRR family.

The protein localises to the cytoplasm. The protein resides in the membrane. Confers resistance to late blight (Phytophthora infestans) races carrying the avirulence gene Avr1. Resistance proteins guard the plant against pathogens that contain an appropriate avirulence protein via an indirect interaction with this avirulence protein. That triggers a defense system including the hypersensitive response, which restricts the pathogen growth. This is Putative late blight resistance protein homolog R1A-3 (R1A-3) from Solanum demissum (Wild potato).